We begin with the raw amino-acid sequence, 579 residues long: Carboxysome shell carbonic anhydrase (579 aa).

Residues Gly-72–Thr-95 are disordered. A compositionally biased stretch (basic and acidic residues) spans Ser-78–Gly-93. Zn(2+) is bound at residue Cys-240. The active-site Proton acceptor is Asp-242. Residues His-308 and Cys-319 each coordinate Zn(2+).

Belongs to the beta-class carbonic anhydrase family. CsoSCA subfamily. Homodimer. The cofactor is Zn(2+).

It localises to the carboxysome. The catalysed reaction is hydrogencarbonate + H(+) = CO2 + H2O. Inhibited by dithiothreitol, partially inhibited by acetatzolamide and cyanide. Functionally, reversible hydration of carbon dioxide. Essential for photosynthetic carbon dioxide fixation, supplies CO(2) to RuBisCO (ribulose bisphosphate carboxylase, cbbL-cbbS) in the carboxysome. The polypeptide is Carboxysome shell carbonic anhydrase (Parasynechococcus marenigrum (strain WH8102)).